A 337-amino-acid polypeptide reads, in one-letter code: SAGA complex subunit SPT3 (337 aa).

Residues 92–131 (KDQDASAGVASGTGNPGAGGEDDLKKAGGGEKDEKDGGNM) form a disordered region. Residues 113 to 128 (DDLKKAGGGEKDEKDG) show a composition bias toward basic and acidic residues. At serine 270 the chain carries Phosphoserine.

The protein belongs to the SPT3 family. As to quaternary structure, component of the 1.8 MDa SAGA (Spt-Ada-Gcn5 acetyltransferase) complex, which is composed of 19 subunits TRA1, SPT7, TAF5, NGG1/ADA3, SGF73, SPT20/ADA5, SPT8, TAF12, TAF6, HFI1/ADA1, UBP8, GCN5, ADA2, SPT3, SGF29, TAF10, TAF9, SGF11 and SUS1. The SAGA complex is composed of 4 modules, namely the HAT (histone acetyltransferase) module (GCN5, ADA2, NGG1/ADA3 and SGF29), the DUB (deubiquitinating) module (UBP8, SGF11, SGF73 and SUS1), the core or TAF (TBP-associated factor) module (TAF5, TAF6, TAF9, TAF10 and TAF12), and the Tra1 or SPT (Suppressor of Ty) module (TRA1, HFI1/ADA1, SPT3, SPT7, SPT8 and SPT20/ADA5). The Tra1/SPT module binds activators, the core module recruits TBP (TATA-binding protein), the HAT module contains the histone H3 acetyltransferase GCN5, and the DUB module comprises the histone H2B deubiquitinase UBP8. Also identified in an altered form of SAGA, named SALSA (SAGA altered, Spt8 absent) or SLIK (SAGA-like) complex, which contains a C-terminal truncated form of SPT7 and is missing SPT8. However, it has been shown that the SAGA and SAGA-like SALSA/SLIK transcriptional coactivators are structurally and biochemically equivalent.

It is found in the nucleus. The protein localises to the cytoplasm. In terms of biological role, component of the transcription coactivator SAGA complex. SAGA acts as a general cofactor required for essentially all RNA polymerase II transcription. At the promoters, SAGA is required for transcription pre-initiation complex (PIC) recruitment. It influences RNA polymerase II transcriptional activity through different activities such as TBP interaction (via core/TAF module) and promoter selectivity, interaction with transcription activators (via Tra1/SPT module), and chromatin modification through histone acetylation (via HAT module) and deubiquitination (via DUB module). SAGA preferentially acetylates histones H3 (to form H3K9ac, H3K14ac, H3K18ac and H3K23ac) and H2B and deubiquitinates histone H2B. SAGA interacts with DNA via upstream activating sequences (UASs). Also identified in a modified version of SAGA named SALSA or SLIK. The cleavage of SPT7 and the absence of the SPT8 subunit in SLIK neither drive any major conformational differences in its structure compared with SAGA, nor significantly affect HAT, DUB, or DNA-binding activities. SPT3 is required for recruitment of TATA-binding protein (TBP) to SAGA-dependent promoters. During SAGA-mediated transcriptional inhibition, SPT3 and SPT8 prevent binding of TBP to the TATA box. Required for diploid filamentous growth and haploid invasive growth. The polypeptide is SAGA complex subunit SPT3 (SPT3) (Saccharomyces cerevisiae (strain ATCC 204508 / S288c) (Baker's yeast)).